Consider the following 353-residue polypeptide: BLOC-1-related complex subunit 6 (353 aa).

The tract at residues 23–194 (AIFGDGPGQT…SGAGGGRRAT (172 aa)) is disordered. Residues 102-126 (FDLHGSSRRKDPEPPEAKPESERVC) are compositionally biased toward basic and acidic residues. Ser130 and Ser166 each carry phosphoserine. Over residues 172-191 (GACGGPASSGGAESGAGGGR) the composition is skewed to gly residues. At Thr194 the chain carries Phosphothreonine. Position 197 is a phosphoserine (Ser197). The interval 225–253 (LSGAPQPPPPAPTRPCSAPTPTPAIPPID) is disordered. Positions 229-253 (PQPPPPAPTRPCSAPTPTPAIPPID) are enriched in pro residues.

Belongs to the BORCS6 family. Component of the BLOC-one-related complex (BORC) which is composed of BLOC1S1, BLOC1S2, BORCS5, BORCS6, BORCS7, BORCS8, KXD1 and SNAPIN.

The protein localises to the lysosome membrane. In terms of biological role, as part of the BORC complex may play a role in lysosomes movement and localization at the cell periphery. Associated with the cytosolic face of lysosomes, the BORC complex may recruit ARL8B and couple lysosomes to microtubule plus-end-directed kinesin motor. The protein is BLOC-1-related complex subunit 6 of Bos taurus (Bovine).